We begin with the raw amino-acid sequence, 274 residues long: Lectizyme (274 aa).

The first 16 residues, 1–16 (MKFFAVFALCVASVSA), serve as a signal peptide directing secretion. Positions 32 to 268 (IINGHEAEKG…FDKWIEDSIE (237 aa)) constitute a Peptidase S1 domain. Cysteine 57 and cysteine 73 are disulfide-bonded. Residues histidine 72 and aspartate 119 each act as charge relay system in the active site. 2 disulfide bridges follow: cysteine 188/cysteine 204 and cysteine 215/cysteine 244. The active-site Charge relay system is serine 219.

The protein belongs to the peptidase S1 family. As to expression, expressed in the midgut.

The protein resides in the secreted. Protein with lectin and protease activity involved in the establishment of trypanosome infections in tsetse flies. Binds D-glucosamine and agglutinates bloodstream-form trypanosomes and rabbit red blood cells. Capable of inducing transformation of bloodstream-form trypanosomes into procyclic (midgut) forms in vitro. This Glossina austeni (Savannah tsetse fly) protein is Lectizyme (Gpl).